A 279-amino-acid chain; its full sequence is Pantothenate synthetase (279 aa).

Position 31 to 38 (31 to 38 (MGALHEGH)) interacts with ATP. His-38 (proton donor) is an active-site residue. Position 62 (Gln-62) interacts with (R)-pantoate. Gln-62 contributes to the beta-alanine binding site. An ATP-binding site is contributed by 148–151 (GEKD). Gln-154 is a (R)-pantoate binding site. ATP contacts are provided by residues Val-177 and 185–188 (LSSR).

This sequence belongs to the pantothenate synthetase family. In terms of assembly, homodimer.

Its subcellular location is the cytoplasm. It carries out the reaction (R)-pantoate + beta-alanine + ATP = (R)-pantothenate + AMP + diphosphate + H(+). It functions in the pathway cofactor biosynthesis; (R)-pantothenate biosynthesis; (R)-pantothenate from (R)-pantoate and beta-alanine: step 1/1. In terms of biological role, catalyzes the condensation of pantoate with beta-alanine in an ATP-dependent reaction via a pantoyl-adenylate intermediate. In Cereibacter sphaeroides (strain ATCC 17023 / DSM 158 / JCM 6121 / CCUG 31486 / LMG 2827 / NBRC 12203 / NCIMB 8253 / ATH 2.4.1.) (Rhodobacter sphaeroides), this protein is Pantothenate synthetase.